The following is a 438-amino-acid chain: MYLIADWRRTHYSEEVIPEMDGQEVILMGWVHSIRALGKLAFVILRDREGTIQAVVPKQKVDEETFEIAKKLGKEDIIAIRGKVVANEKAPKGFEVIPIEIRVLNKADAPLPLDPSEKVPAEIDTRLDKRFLDIRRPKIQAIFKIRSEMLRSIRKTFADEGFIEVNTPKLVASATEGGTELFPISYFEKEAFLGQSPQLYKQMMMAGGFDKVFEIAQIFRAEEHNTRRHLNEAVSIDTEMSFVNEKDAMAMLEKVVYNCYADIEYNRPQEIELLELNWEVPEKTFDKVTYTEAIDIAISKGVEIEWGEDLSRAAERAVGDEMGGLYFITEWPTQTRPFYTLPHEKDAKVCKAFDLMYKELEISSGAQRVHKYDLLVENISNMGMNPDSFETYLEAFKFGMPPHAGWGLGADRFAMVLTAQDNIRECVLFPRDRQRLTP.

Residue glutamate 176 coordinates L-aspartate. An aspartate region spans residues 198 to 201 (QLYK). Arginine 220 serves as a coordination point for L-aspartate. Residues 220 to 222 (RAE), 228 to 230 (RHL), and glutamate 361 each bind ATP. Mg(2+) is bound by residues glutamate 361 and serine 364. L-aspartate contacts are provided by serine 364 and arginine 368. Residue 409–412 (GADR) participates in ATP binding.

This sequence belongs to the class-II aminoacyl-tRNA synthetase family. Type 2 subfamily. As to quaternary structure, homodimer. Mg(2+) serves as cofactor.

It is found in the cytoplasm. It carries out the reaction tRNA(Asx) + L-aspartate + ATP = L-aspartyl-tRNA(Asx) + AMP + diphosphate. Functionally, aspartyl-tRNA synthetase with relaxed tRNA specificity since it is able to aspartylate not only its cognate tRNA(Asp) but also tRNA(Asn). Reaction proceeds in two steps: L-aspartate is first activated by ATP to form Asp-AMP and then transferred to the acceptor end of tRNA(Asp/Asn). In Methanococcus maripaludis (strain C6 / ATCC BAA-1332), this protein is Aspartate--tRNA(Asp/Asn) ligase.